Reading from the N-terminus, the 183-residue chain is Proton-transporting V-type ATPase complex assembly regulator TMEM9 (183 aa).

An N-terminal signal peptide occupies residues M1–A20. Residues N21, N38, and N47 are each glycosylated (N-linked (GlcNAc...) asparagine). The Extracellular portion of the chain corresponds to N21–K89. The chain crosses the membrane as a helical span at residues V90–M110. Residues L111 to S183 lie on the Cytoplasmic side of the membrane. S144 is subject to Phosphoserine.

This sequence belongs to the TMEM9 family. In terms of assembly, interacts with the v-ATPase accessory protein ATP6AP2 and with the v-ATPase complex subunit ATP6V0D1; these interactions lead to the assembly of the v-ATPase complex. In terms of processing, N-glycosylated. As to expression, expressed in heart, lung, kidney, liver and intestines. Enriched in the hepatocytes around the central vein.

The protein localises to the lysosome membrane. It localises to the late endosome membrane. The protein resides in the endosome. Its subcellular location is the multivesicular body membrane. Transmembrane protein that binds to and facilitates the assembly of lysosomal proton-transporting V-type ATPase (v-ATPase), resulting in enhanced lysosomal acidification and trafficking. By bringing the v-ATPase accessory protein ATP6AP2 and the v-ATPase subunit ATP6V0D1 together, allows v-ATPase complex formation and activation. TMEM9-controlled vesicular acidification induces hyperactivation of Wnt/beta-catenin signaling, involved in development, tissue homeostasis and tissue regeneration, through lysosomal degradation of adenomatous polyposis coli/APC. In the liver, involved in hepatic regeneration. The chain is Proton-transporting V-type ATPase complex assembly regulator TMEM9 from Mus musculus (Mouse).